Reading from the N-terminus, the 945-residue chain is Leucine--tRNA ligase (945 aa).

The 'HIGH' region motif lies at 43–53; the sequence is PYPNGAIHIGH. Positions 638-642 match the 'KMSKS' region motif; sequence KMSKS. ATP is bound at residue Lys-641.

This sequence belongs to the class-I aminoacyl-tRNA synthetase family.

The protein resides in the cytoplasm. It catalyses the reaction tRNA(Leu) + L-leucine + ATP = L-leucyl-tRNA(Leu) + AMP + diphosphate. In Pyrobaculum arsenaticum (strain DSM 13514 / JCM 11321 / PZ6), this protein is Leucine--tRNA ligase.